The primary structure comprises 180 residues: Hypoxanthine-guanine phosphoribosyltransferase (180 aa).

Positions 43 and 44 each coordinate diphosphate. Glutamate 99 and aspartate 100 together coordinate Mg(2+). The active-site Proton acceptor is aspartate 103. GMP-binding positions include lysine 131, 152-153 (FV), and aspartate 159. Diphosphate is bound at residue arginine 165.

The protein belongs to the purine/pyrimidine phosphoribosyltransferase family. The cofactor is Mg(2+).

Its subcellular location is the cytoplasm. It carries out the reaction IMP + diphosphate = hypoxanthine + 5-phospho-alpha-D-ribose 1-diphosphate. It catalyses the reaction GMP + diphosphate = guanine + 5-phospho-alpha-D-ribose 1-diphosphate. It functions in the pathway purine metabolism; IMP biosynthesis via salvage pathway; IMP from hypoxanthine: step 1/1. It participates in purine metabolism; GMP biosynthesis via salvage pathway; GMP from guanine: step 1/1. Purine salvage pathway enzyme that catalyzes the transfer of the ribosyl-5-phosphate group from 5-phospho-alpha-D-ribose 1-diphosphate (PRPP) to the N9 position of the 6-oxopurines hypoxanthine and guanine to form the corresponding ribonucleotides IMP (inosine 5'-monophosphate) and GMP (guanosine 5'-monophosphate), with the release of PPi. This Streptococcus pneumoniae serotype 4 (strain ATCC BAA-334 / TIGR4) protein is Hypoxanthine-guanine phosphoribosyltransferase (hpt).